The primary structure comprises 148 residues: D-aminoacyl-tRNA deacylase (148 aa).

Positions 137–138 match the Gly-cisPro motif, important for rejection of L-amino acids motif; it reads GP.

Belongs to the DTD family. In terms of assembly, homodimer.

It is found in the cytoplasm. The catalysed reaction is glycyl-tRNA(Ala) + H2O = tRNA(Ala) + glycine + H(+). The enzyme catalyses a D-aminoacyl-tRNA + H2O = a tRNA + a D-alpha-amino acid + H(+). Functionally, an aminoacyl-tRNA editing enzyme that deacylates mischarged D-aminoacyl-tRNAs. Also deacylates mischarged glycyl-tRNA(Ala), protecting cells against glycine mischarging by AlaRS. Acts via tRNA-based rather than protein-based catalysis; rejects L-amino acids rather than detecting D-amino acids in the active site. By recycling D-aminoacyl-tRNA to D-amino acids and free tRNA molecules, this enzyme counteracts the toxicity associated with the formation of D-aminoacyl-tRNA entities in vivo and helps enforce protein L-homochirality. This is D-aminoacyl-tRNA deacylase from Deinococcus geothermalis (strain DSM 11300 / CIP 105573 / AG-3a).